A 440-amino-acid polypeptide reads, in one-letter code: Thymidine phosphorylase (440 aa).

This sequence belongs to the thymidine/pyrimidine-nucleoside phosphorylase family. As to quaternary structure, homodimer.

The catalysed reaction is thymidine + phosphate = 2-deoxy-alpha-D-ribose 1-phosphate + thymine. It functions in the pathway pyrimidine metabolism; dTMP biosynthesis via salvage pathway; dTMP from thymine: step 1/2. Its function is as follows. The enzymes which catalyze the reversible phosphorolysis of pyrimidine nucleosides are involved in the degradation of these compounds and in their utilization as carbon and energy sources, or in the rescue of pyrimidine bases for nucleotide synthesis. This Escherichia coli (strain K12 / DH10B) protein is Thymidine phosphorylase.